The primary structure comprises 204 residues: Guanylate kinase (204 aa).

Positions 18–196 (PKLFTISAPA…SYEILKSIFI (179 aa)) constitute a Guanylate kinase-like domain. Position 25-32 (25-32 (APAGAGKT)) interacts with ATP.

This sequence belongs to the guanylate kinase family.

The protein localises to the cytoplasm. The enzyme catalyses GMP + ATP = GDP + ADP. In terms of biological role, essential for recycling GMP and indirectly, cGMP. This Chlamydia felis (strain Fe/C-56) (Chlamydophila felis) protein is Guanylate kinase.